The chain runs to 1601 residues: MNSPVDPGARQALRKKPPERTPEDLNTIYSYLHGMEILSNLREHQLRLMSARARYERYSGNQVLFCSETIARCWYILLSGSVLVKGSMVLPPCSFGKQFGGKRGCDCLVLEPSEMIVVENAKDNEDSILQREIPARQSRRRFRKINYKGERQTITDDVEVNSYLSLPADLTKMHLTENPHPQVTHVSSSQSGCSIASDSGSSSLSDIYQATESEVGDVDLTRLPEGPVDSEDDEEEDEEIDRTDPLQGRDLVRECLEKEPADKTDDDIEQLLEFMHQLPAFANMTMSVRRELCSVMIFEVVEQAGAIILEDGQELDSWYVILNGTVEISHPDGKVENLFMGNSFGITPTLDKQYMHGIVRTKVDDCQFVCIAQQDYWRILNHVEKNTHKVEEEGEIVMVHEHRELDRSGTRKGHIVIKATPERLIMHLIEEHSIVDPTYIEDFLLTYRTFLESPLDVGIKLLEWFKIDSLRDKVTRIVLLWVNNHFNDFEGDPAMTRFLEEFEKNLEDTKMNGHLRLLNIACAAKAKWRQVVLQKASRESPLQFSLNGGSEKGFGIFVEGVEPGSKAADSGLKRGDQIMEVNGQNFENITFMKAVEILRNNTHLALTVKTNIFVFKELLFRTEQEKSGVPHIPKIAEKKSNRHSIQHVPGDIEQTSQEKGSKKVKANTVSGGRNKIRKILDKTRFSILPPKLFSDGGLSQSQDDSIVGTRHCRHSLAIMPIPGTLSSSSPDLLQPTTSMLDFSNPSDIPDQVIRVFKVDQQSCYIIISKDTTAKEVVFHAVHEFGLTGASDTYSLCEVSVTPEGVIKQRRLPDQFSKLADRIQLNGRYYLKNNMETETLCSDEDAQELVKESQLSMLQLSTIEVATQLSMRDFDLFRNIEPTEYIDDLFKLNSKTGNTHLKRFEDIVNQETFWVASEILTEANQLKRMKIIKHFIKIALHCRECKNFNSMFAIISGLNLASVARLRGTWEKLPSKYEKHLQDLQDIFDPSRNMAKYRNILSSQSMQPPIIPLFPVVKKDMTFLHEGNDSKVDGLVNFEKLRMISKEIRQVVRMTSANMDPAMMFRQRSLSQGSTNSNMLDVQGGAHKKRARRSSLLNAKKLYEDAQMARKVKQYLSSLDVETDEEKFQMMSLQWEPAYGTLTKNLSEKRSAKSSEMSPVPMRSAGQTTKAHLHQPHRVSQVLQVPAVNLHPIRKKGQTKDPALNTSLPQKVLGTTEEISGKKHTEDTISVASSLHSSPPASPQGSPHKGYTLIPSAKSDNLSDSSHSEISSRSSIVSNCSVDSMSAALQDERCSSQALAVPESTGALEKTEHASGIGDHSQHGPGWTLLKPSLIKCLAVSSSVSNEEISQEHIIIEAADSGRGSWTSCSSSSHDNFQSLPNPKSWDFLNSYRHTHLDDPIAEVEPTDSEPYSCSKSCSRTCGQCKGSLERKSWTSSSSLSDTYEPNYGTVKQRVLESTPAESSEGLDPKDATDPVYKTVTSSTEKGLIVYCVTSPKKDDRYREPPPTPPGYLGISLADLKEGPHTHLKPPDYSVAVQRSKMMHNSLSRLPPASLSSNLVACVPSKIVTQPQRHNLQPFHPKLGDVTDADSEADENEQVSAV.

Methionine 1 carries the N-acetylmethionine modification. Disordered stretches follow at residues methionine 1 to proline 22 and proline 179 to aspartate 250. At serine 3 the chain carries Phosphoserine. Positions serine 187–serine 205 are enriched in low complexity. Over residues valine 228–aspartate 241 the composition is skewed to acidic residues. Alanine 280–valine 399 serves as a coordination point for a nucleoside 3',5'-cyclic phosphate. The region spanning lysine 412–alanine 526 is the N-terminal Ras-GEF domain. The 86-residue stretch at glutamine 530 to phenylalanine 615 folds into the PDZ domain. Residues proline 749–glutamate 835 enclose the Ras-associating domain. One can recognise a Ras-GEF domain in the interval serine 860–lysine 1088. Disordered stretches follow at residues isoleucine 1192–serine 1274, glutamate 1302–proline 1324, leucine 1455–threonine 1478, and glutamine 1571–valine 1601. Low complexity-rich tracts occupy residues serine 1229 to proline 1238 and serine 1255 to serine 1274. A compositionally biased stretch (acidic residues) spans threonine 1586 to valine 1601.

Interacts with the second PDZ domain of human PTP1e. In terms of tissue distribution, isoform 3 has highest expression levels in the brain, heart, liver, lung and placenta and is barely detectable in skeletal muscle, kidney and pancreas.

The protein resides in the cytoplasm. Its subcellular location is the cell membrane. Its function is as follows. Guanine nucleotide exchange factor (GEF) for Rap1A, Rap2A and M-Ras GTPases. Does not interact with cAMP. The chain is Rap guanine nucleotide exchange factor 6 (RAPGEF6) from Homo sapiens (Human).